A 62-amino-acid polypeptide reads, in one-letter code: MARYRRHSRSRSRSRYRRRRRRRSRHHNRRRTYRRSRRHSRRRRGRRRGYSRRRYSRRRRRY.

Residues 1–62 (MARYRRHSRS…RRYSRRRRRY (62 aa)) are disordered.

The protein belongs to the protamine P1 family. In terms of tissue distribution, testis.

The protein localises to the nucleus. It localises to the chromosome. In terms of biological role, protamines substitute for histones in the chromatin of sperm during the haploid phase of spermatogenesis. They compact sperm DNA into a highly condensed, stable and inactive complex. This is Sperm protamine P1 (PRM1) from Sminthopsis longicaudata (Long-tailed dunnart).